Consider the following 119-residue polypeptide: UPF0231 protein YPTB0717 (119 aa).

The protein belongs to the UPF0231 family.

This chain is UPF0231 protein YPTB0717, found in Yersinia pseudotuberculosis serotype I (strain IP32953).